The sequence spans 270 residues: DNA packaging protein OPG160 (270 aa).

An ATP-binding site is contributed by 25-32 (GGSGSGKT).

This sequence belongs to the orthopoxvirus OPG160 protein family. Interacts with protein OPG137.

In terms of biological role, participates in viral DNA packaging and virion morphogenesis. The sequence is that of DNA packaging protein OPG160 (OPG160) from Variola virus (isolate Human/India/Ind3/1967) (VARV).